A 375-amino-acid polypeptide reads, in one-letter code: METPDETTVRAADSCRESLPERVDGGRVLFGFDGYIDRVREFVSERQSADTYERVPTLDAFAERVNDSVEAESSLTFEWIQDGVRTGGHVSHLARAFDRMGFEPGVVGCLGDPVEEPFVEEFGHLPLETLGSPGYTDAVEFGDGKLMLTEIGALMTLDWAGIESRVGLDRLAELVDGAELVGMGYWSEMPELPDVARGLREELWPTLSDPPETLLLDPGDLRKRGPDVVAAGVEQVSALDDAVRVVVSANRYETRYLARLAGVESDDFGRESQAAFDHLGVSRFAGHGIEEAHLVDEAGTATVGVPRTDDPVLTTSSGDHFNAGLALAHVLDLGRAESLVVGNAVAGHFVRTGSPPTYDELRAFASGYLDYFDAA.

Asp-319 lines the beta-D-fructose pocket.

It belongs to the carbohydrate kinase PfkB family. As to quaternary structure, homodimer.

It carries out the reaction beta-D-fructose + ATP = beta-D-fructose 1-phosphate + ADP + H(+). It participates in carbohydrate metabolism; fructose metabolism. With respect to regulation, activated in the presence of 0.5 M KCl. 85% activity at 3.5 M KCl. 60% activity without KCl. Catalyzes the ATP-dependent phosphorylation of the ketose sugar fructose to fructose-1-phosphate. Does not produce fructose-6-phosphate. The sugars D-glucose, D-galactose, L-rhamnose, D-xylose, L-arabinose and D-ribose are not substrates of this enzyme. The sequence is that of Ketohexokinase from Haloferax volcanii (strain ATCC 29605 / DSM 3757 / JCM 8879 / NBRC 14742 / NCIMB 2012 / VKM B-1768 / DS2) (Halobacterium volcanii).